The primary structure comprises 856 residues: DNA mismatch repair protein MutS (856 aa).

An ATP-binding site is contributed by 607-614 (GPNMAGKS).

This sequence belongs to the DNA mismatch repair MutS family.

Its function is as follows. This protein is involved in the repair of mismatches in DNA. It is possible that it carries out the mismatch recognition step. This protein has a weak ATPase activity. The polypeptide is DNA mismatch repair protein MutS (Cytophaga hutchinsonii (strain ATCC 33406 / DSM 1761 / CIP 103989 / NBRC 15051 / NCIMB 9469 / D465)).